A 154-amino-acid chain; its full sequence is Protein X (154 aa).

Positions 68–117 (PCALRFTSARSMETTVNAHQVLPKVLHKRTLGLSAMSTTDLEAYFKDCLF) are mitochondrial targeting sequence.

It belongs to the orthohepadnavirus protein X family. In terms of assembly, may form homodimer. May interact with host CEBPA, CFLAR, CREB1, DDB1, E4F1, HBXIP, HSPD1/HSP60, NFKBIA, POLR2E and SMAD4. Interacts with host SMC5-SMC6 complex and induces its degradation. Interacts with host TRPC4AP; leading to prevent ubiquitination of TRPC4AP. Interacts with host PLSCR1; this interaction promotes ubiquitination and degradation of HBx and impairs HBx-mediated cell proliferation. Post-translationally, a fraction may be phosphorylated in insect cells and HepG2 cells, a human hepatoblastoma cell line. Phosphorylated in vitro by host protein kinase C or mitogen-activated protein kinase. N-acetylated in insect cells.

Its subcellular location is the host cytoplasm. The protein resides in the host nucleus. It is found in the host mitochondrion. In terms of biological role, multifunctional protein that plays a role in silencing host antiviral defenses and promoting viral transcription. Does not seem to be essential for HBV infection. May be directly involved in development of cirrhosis and liver cancer (hepatocellular carcinoma). Most of cytosolic activities involve modulation of cytosolic calcium. The effect on apoptosis is controversial depending on the cell types in which the studies have been conducted. May induce apoptosis by localizing in mitochondria and causing loss of mitochondrial membrane potential. May also modulate apoptosis by binding host CFLAR, a key regulator of the death-inducing signaling complex (DISC). Promotes viral transcription by using the host E3 ubiquitin ligase DDB1 to target the SMC5-SMC6 complex to proteasomal degradation. This host complex would otherwise bind to viral episomal DNA, and prevents its transcription. Moderately stimulates transcription of many different viral and cellular transcription elements. Promoters and enhancers stimulated by HBx contain DNA binding sites for NF-kappa-B, AP-1, AP-2, c-EBP, ATF/CREB, or the calcium-activated factor NF-AT. This Homo sapiens (Human) protein is Protein X.